Consider the following 941-residue polypeptide: Bifunctional glutamine synthetase adenylyltransferase/adenylyl-removing enzyme (941 aa).

Residues 1–431 (MSSAPPFAAA…TFRNAFRLAG (431 aa)) are adenylyl removase. Residues 447–941 (NGHAMRPHAG…DGTIAQAEVK (495 aa)) form an adenylyl transferase region.

It belongs to the GlnE family. Mg(2+) serves as cofactor.

The catalysed reaction is [glutamine synthetase]-O(4)-(5'-adenylyl)-L-tyrosine + phosphate = [glutamine synthetase]-L-tyrosine + ADP. The enzyme catalyses [glutamine synthetase]-L-tyrosine + ATP = [glutamine synthetase]-O(4)-(5'-adenylyl)-L-tyrosine + diphosphate. Involved in the regulation of glutamine synthetase GlnA, a key enzyme in the process to assimilate ammonia. When cellular nitrogen levels are high, the C-terminal adenylyl transferase (AT) inactivates GlnA by covalent transfer of an adenylyl group from ATP to specific tyrosine residue of GlnA, thus reducing its activity. Conversely, when nitrogen levels are low, the N-terminal adenylyl removase (AR) activates GlnA by removing the adenylyl group by phosphorolysis, increasing its activity. The regulatory region of GlnE binds the signal transduction protein PII (GlnB) which indicates the nitrogen status of the cell. This is Bifunctional glutamine synthetase adenylyltransferase/adenylyl-removing enzyme from Bordetella pertussis (strain Tohama I / ATCC BAA-589 / NCTC 13251).